The following is a 660-amino-acid chain: DNA polymerase alpha-associated DNA helicase A (660 aa).

232–239 (GPPGTGKT) serves as a coordination point for ATP.

It belongs to the DNA2/NAM7 helicase family. As to quaternary structure, associates with the hexameric DNA polymerase alpha.

The protein localises to the cytoplasm. The protein resides in the nucleus. It carries out the reaction ATP + H2O = ADP + phosphate + H(+). In terms of biological role, DNA polymerase alpha-associated DNA helicase which may be involved in DNA replication. The chain is DNA polymerase alpha-associated DNA helicase A (hcs1) from Schizosaccharomyces pombe (strain 972 / ATCC 24843) (Fission yeast).